The sequence spans 326 residues: Diphthine methyltransferase (326 aa).

WD repeat units follow at residues 65–105 (MHCD…ELMF), 113–152 (DSSV…IKNK), 155–195 (EHDY…SCIW), and 293–326 (EHES…WEDI).

Belongs to the DPH7 family.

The protein localises to the cytoplasm. It is found in the nucleus. The enzyme catalyses diphthine methyl ester-[translation elongation factor 2] + H2O = diphthine-[translation elongation factor 2] + methanol + H(+). The protein operates within protein modification; peptidyl-diphthamide biosynthesis. Its function is as follows. Catalyzes the demethylation of diphthine methyl ester to form diphthine, an intermediate in diphthamide biosynthesis, a post-translational modification of histidine which occurs in translation elongation factor 2 (eft201 and eft202). The sequence is that of Diphthine methyltransferase (rrt2) from Schizosaccharomyces pombe (strain 972 / ATCC 24843) (Fission yeast).